A 37-amino-acid chain; its full sequence is Large ribosomal subunit protein bL36 (37 aa).

It belongs to the bacterial ribosomal protein bL36 family.

The protein is Large ribosomal subunit protein bL36 of Desulforudis audaxviator (strain MP104C).